Reading from the N-terminus, the 512-residue chain is MKQQKRLYARLLTLLFALIFLLPHSAAAAANLNGTLMQYFEWYMPNDGQHWKRLQNDSAYLAEHGITAVWIPPAYKGTSQADVGYGAYDLYDLGEFHQKGTVRTKYGTKGELQSAIKSLHSRDINVYGDVVINHKGGADATEDVTAVEVDPADRNRVISGEHRIKAWTHFHFPGRGSTYSDFKWHWYHFDGTDWDESRKLNRIYKFQGKAWDWEVSNENGNYDYLMYADIDYDHPDVAAEIKRWGTWYANELQLDGFRLDAVKHIKFSFLRDWVNHVREKTGKEMFTVAEYWQNDLGALENYLNKTNFNHSVFDVPLHYQFHAASTQGGGYDMRKLLNSTVVSKHPLKAVTFVDNHDTQPGQSLESTVQTWFKPLAYAFILTRESGYPQVFYGDMYGTKGDSQREIPALKHKIEPILKARKQYAYGAQHDYFDHHDIVGWTREGDSSVANSGLAALITDGPGGAKRMYVGRQNAGETWHDITGNRSEPVVINSEGWGEFHVNGGSVSIYVQR.

The N-terminal stretch at 1–29 is a signal peptide; it reads MKQQKRLYARLLTLLFALIFLLPHSAAAA. Ca(2+) contacts are provided by asparagine 133, aspartate 190, alanine 210, aspartate 212, aspartate 223, aspartate 229, aspartate 231, and aspartate 233. A Na(+)-binding site is contributed by aspartate 190. Positions 212, 223, and 229 each coordinate Na(+). The active-site Nucleophile is aspartate 260. Histidine 264 serves as a coordination point for Ca(2+). Glutamate 290 acts as the Proton donor in catalysis. Residues glycine 329, tyrosine 331, histidine 435, aspartate 436, and aspartate 459 each contribute to the Ca(2+) site.

This sequence belongs to the glycosyl hydrolase 13 family. In terms of assembly, monomer. Ca(2+) is required as a cofactor. Requires Na(+) as cofactor.

The protein localises to the secreted. It carries out the reaction Endohydrolysis of (1-&gt;4)-alpha-D-glucosidic linkages in polysaccharides containing three or more (1-&gt;4)-alpha-linked D-glucose units.. In Bacillus licheniformis, this protein is Alpha-amylase (amyS).